We begin with the raw amino-acid sequence, 132 residues long: Phosphoribosyl-AMP cyclohydrolase (132 aa).

Asp79 contributes to the Mg(2+) binding site. Residue Cys80 participates in Zn(2+) binding. Residues Asp81 and Asp83 each contribute to the Mg(2+) site. Zn(2+) is bound by residues Cys100 and Cys107.

Belongs to the PRA-CH family. As to quaternary structure, homodimer. Mg(2+) serves as cofactor. Zn(2+) is required as a cofactor.

The protein localises to the cytoplasm. It carries out the reaction 1-(5-phospho-beta-D-ribosyl)-5'-AMP + H2O = 1-(5-phospho-beta-D-ribosyl)-5-[(5-phospho-beta-D-ribosylamino)methylideneamino]imidazole-4-carboxamide. Its pathway is amino-acid biosynthesis; L-histidine biosynthesis; L-histidine from 5-phospho-alpha-D-ribose 1-diphosphate: step 3/9. Its function is as follows. Catalyzes the hydrolysis of the adenine ring of phosphoribosyl-AMP. This chain is Phosphoribosyl-AMP cyclohydrolase, found in Acidovorax ebreus (strain TPSY) (Diaphorobacter sp. (strain TPSY)).